A 297-amino-acid polypeptide reads, in one-letter code: Probable endonuclease 4 (297 aa).

Positions 68, 109, 144, 178, 181, 213, 226, 228, and 258 each coordinate Zn(2+).

It belongs to the AP endonuclease 2 family. Zn(2+) is required as a cofactor.

The catalysed reaction is Endonucleolytic cleavage to 5'-phosphooligonucleotide end-products.. In terms of biological role, endonuclease IV plays a role in DNA repair. It cleaves phosphodiester bonds at apurinic or apyrimidinic (AP) sites, generating a 3'-hydroxyl group and a 5'-terminal sugar phosphate. In Lysinibacillus sphaericus (strain C3-41), this protein is Probable endonuclease 4.